The sequence spans 443 residues: Adenylate cyclase (443 aa).

Transmembrane regions (helical) follow at residues 47-69 (VLTI…QLAT), 74-93 (WYIA…VPLL), 98-120 (GLVA…GWDV), 124-143 (AGAQ…LVGI), 148-167 (LAVG…EFLV), and 180-202 (SVSF…WFAL). The Cytoplasmic portion of the chain corresponds to 203–443 (RDTARAEAVM…RGAEPRTAGV (241 aa)). In terms of domain architecture, Guanylate cyclase spans 251 to 378 (SVLFADIVGF…DAVNVASRME (128 aa)). Residues D256 and D300 each contribute to the Mg(2+) site.

It belongs to the adenylyl cyclase class-4/guanylyl cyclase family. Homodimer. Can also exist as monomer. Requires Mg(2+) as cofactor. Mn(2+) is required as a cofactor.

The protein resides in the cell membrane. It catalyses the reaction ATP = 3',5'-cyclic AMP + diphosphate. This is Adenylate cyclase (cya) from Mycobacterium bovis (strain ATCC BAA-935 / AF2122/97).